Here is a 930-residue protein sequence, read N- to C-terminus: MAEVTVNELATSIGAPVERLLKQMQEAGLQHKTASAKVSDEEKQRLLAYLKGSHGEAAVEPRKITLQRKTTTTIKTGTGNAKKTVNVEVRKKRTYVKREDDVVDNTQAAQSQEQDDELASTVVEEVQQAEPSVVPVVDVAPEPEPEPVVEEVDVAAEEAEPVEAAVDTSAPTRFSFTDGIEEKRRAAIERRQAEEAARQAELKAIEEAKRAAEEAKRTQPRAEKPADKSAAAGKGAKPDNRQPAKGKQAPVAVPVEREDAKHGHGHKKHHHGRNDDDFDDDSADRGNKRGAGKAVKKAAAPKKSSKIDLLDFVGDDSEDSDVLARRSHIRAHHKKNNKHAFKKPTTQIVHEIDIPETIAVSELAQRLTIKVGELIKRLMKMGVMASMNEQIDQDTAVLIVEELGHKANLVSENDIEHALEKSLETAGELTTRAPVVTVMGHVDHGKTSLLDYIREAKVAAGEAGGITQHIGAYRVTTSRGEITFLDTPGHAAFTAMRARGAKATDVVILVVAADDGVMPQTEEAIMHARAAEVPIVVAINKCDKPSADPDRVTNELVAKGVIPEAYGGDTQFVQVSAHTGQGIDELLEAISLQAEVLELTAVTNAAAKGVVIEARVDKGRGTVATVLVQQGTLKQGDLILAGQSYGRVRAMVNERGEQVKEAGPSTPVEILGLDMPPSAGDDFVVLDDERKAREVAAFRAEKERKEKLARFQAAKLENMFSNMEAGQKKTLTVVIKADVRGSLEAIQASLADIGNDEVQVNVISSGIGGITENDVNLAVTSGAIIVGFNVRADGATRRLAETEGVDIRYYSIIYQLLDEVKAALSGMLDPERVETIVGIANVREVFNSPKFGQVAGCMVVEGTVYRNKPIRVLRDNVVIFTGELESLRRFKDDVNEVRNGFECGIGVKNYDVKVGDQIEVYEVKEVARQL.

Disordered regions lie at residues 160–179 (EPVE…FTDG) and 208–301 (AKRA…AAAP). A compositionally biased stretch (basic and acidic residues) spans 208-227 (AKRAAEEAKRTQPRAEKPAD). Basic residues-rich tracts occupy residues 263-272 (GHGHKKHHHG) and 288-301 (KRGA…AAAP). The 170-residue stretch at 431–600 (TRAPVVTVMG…SLQAEVLELT (170 aa)) folds into the tr-type G domain. Residues 440-447 (GHVDHGKT) are G1. 440-447 (GHVDHGKT) contacts GTP. The interval 465-469 (GITQH) is G2. Residues 486–489 (DTPG) form a G3 region. GTP-binding positions include 486 to 490 (DTPGH) and 540 to 543 (NKCD). The segment at 540-543 (NKCD) is G4. The tract at residues 576 to 578 (SAH) is G5.

Belongs to the TRAFAC class translation factor GTPase superfamily. Classic translation factor GTPase family. IF-2 subfamily.

It localises to the cytoplasm. Functionally, one of the essential components for the initiation of protein synthesis. Protects formylmethionyl-tRNA from spontaneous hydrolysis and promotes its binding to the 30S ribosomal subunits. Also involved in the hydrolysis of GTP during the formation of the 70S ribosomal complex. The protein is Translation initiation factor IF-2 of Cellvibrio japonicus (strain Ueda107) (Pseudomonas fluorescens subsp. cellulosa).